The following is a 171-amino-acid chain: Ribosome-binding factor A (171 aa).

The span at 126-138 shows a compositional bias: basic and acidic residues; it reads VREGAKHAGDADP. A disordered region spans residues 126-171; it reads VREGAKHAGDADPYRVSGVEEEAGGSGEVQAEFDAEDTGDRNRQDD.

Belongs to the RbfA family. Monomer. Binds 30S ribosomal subunits, but not 50S ribosomal subunits or 70S ribosomes.

It is found in the cytoplasm. Its function is as follows. One of several proteins that assist in the late maturation steps of the functional core of the 30S ribosomal subunit. Associates with free 30S ribosomal subunits (but not with 30S subunits that are part of 70S ribosomes or polysomes). Required for efficient processing of 16S rRNA. May interact with the 5'-terminal helix region of 16S rRNA. This Mycobacterium sp. (strain JLS) protein is Ribosome-binding factor A.